A 244-amino-acid chain; its full sequence is tRNA (guanine-N(7)-)-methyltransferase (244 aa).

Residues 1 to 24 form a disordered region; sequence MTDSHVPHPESPAVEEGEERPHRR. The S-adenosyl-L-methionine site is built by Glu74, Glu99, Asp126, and Asp149. Residue Asp149 is part of the active site. Substrate is bound by residues Lys153, Asp185, and 222–225; that span reads TKFE.

It belongs to the class I-like SAM-binding methyltransferase superfamily. TrmB family.

The enzyme catalyses guanosine(46) in tRNA + S-adenosyl-L-methionine = N(7)-methylguanosine(46) in tRNA + S-adenosyl-L-homocysteine. It participates in tRNA modification; N(7)-methylguanine-tRNA biosynthesis. Functionally, catalyzes the formation of N(7)-methylguanine at position 46 (m7G46) in tRNA. This chain is tRNA (guanine-N(7)-)-methyltransferase, found in Pseudomonas savastanoi pv. phaseolicola (strain 1448A / Race 6) (Pseudomonas syringae pv. phaseolicola (strain 1448A / Race 6)).